The following is a 208-amino-acid chain: Probable GTP-binding protein EngB (208 aa).

Residues 18–187 (KQFEICVIGR…FALMKKVVIQ (170 aa)) form the EngB-type G domain. GTP is bound by residues 26-33 (GRSNVGKS), 52-56 (GRTQL), 69-72 (DLPG), 135-138 (NKLD), and 166-168 (VSA). Residues serine 33 and threonine 54 each contribute to the Mg(2+) site.

Belongs to the TRAFAC class TrmE-Era-EngA-EngB-Septin-like GTPase superfamily. EngB GTPase family. It depends on Mg(2+) as a cofactor.

In terms of biological role, necessary for normal cell division and for the maintenance of normal septation. This chain is Probable GTP-binding protein EngB, found in Ureaplasma parvum serovar 3 (strain ATCC 27815 / 27 / NCTC 11736).